A 565-amino-acid chain; its full sequence is Molybdenum cofactor biosynthesis protein 1 (565 aa).

Positions 3–367 are molybdenum cofactor biosynthesis protein A; sequence LLARHAIRLL…AVQRKKKQHA (365 aa). The 213-residue stretch at 64–276 folds into the Radical SAM core domain; that stretch reads SFGRHHTYLR…LQIIRQRWPD (213 aa). Residue Arg-73 coordinates GTP. 2 residues coordinate [4Fe-4S] cluster: Cys-80 and Cys-84. Tyr-86 contributes to the S-adenosyl-L-methionine binding site. Residue Cys-87 participates in [4Fe-4S] cluster binding. Arg-123 is a binding site for GTP. Residue Gly-127 coordinates S-adenosyl-L-methionine. Thr-154 lines the GTP pocket. Ser-178 provides a ligand contact to S-adenosyl-L-methionine. Residue Lys-214 coordinates GTP. Met-248 provides a ligand contact to S-adenosyl-L-methionine. Residues Cys-311 and Cys-314 each contribute to the [4Fe-4S] cluster site. Residue 316-318 participates in GTP binding; that stretch reads RLR. Cys-328 is a binding site for [4Fe-4S] cluster. The active-site For molybdenum cofactor biosynthesis protein C activity is Asp-525.

In the C-terminal section; belongs to the MoaC family. The protein in the N-terminal section; belongs to the radical SAM superfamily. MoaA family. In terms of assembly, isoform Mocs1a and isoform Mocs1b probably form a heterooligomer. [4Fe-4S] cluster serves as cofactor.

It catalyses the reaction GTP + AH2 + S-adenosyl-L-methionine = (8S)-3',8-cyclo-7,8-dihydroguanosine 5'-triphosphate + 5'-deoxyadenosine + L-methionine + A + H(+). The enzyme catalyses (8S)-3',8-cyclo-7,8-dihydroguanosine 5'-triphosphate = cyclic pyranopterin phosphate + diphosphate. The protein operates within cofactor biosynthesis; molybdopterin biosynthesis. Functionally, isoform Mocs1a and isoform Mocs1b probably form a complex that catalyzes the conversion of 5'-GTP to cyclic pyranopterin monophosphate (cPMP). Mocs1a catalyzes the cyclization of GTP to (8S)-3',8-cyclo-7,8-dihydroguanosine 5'-triphosphate and Mocs1b catalyzes the subsequent conversion of (8S)-3',8-cyclo-7,8-dihydroguanosine 5'-triphosphate to cPMP. In Drosophila melanogaster (Fruit fly), this protein is Molybdenum cofactor biosynthesis protein 1 (Mocs1).